Reading from the N-terminus, the 301-residue chain is 4-hydroxy-tetrahydrodipicolinate synthase (301 aa).

T46 contributes to the pyruvate binding site. The Proton donor/acceptor role is filled by Y134. K162 (schiff-base intermediate with substrate) is an active-site residue. Residue I203 coordinates pyruvate.

The protein belongs to the DapA family. Homotetramer; dimer of dimers.

It localises to the cytoplasm. It catalyses the reaction L-aspartate 4-semialdehyde + pyruvate = (2S,4S)-4-hydroxy-2,3,4,5-tetrahydrodipicolinate + H2O + H(+). It functions in the pathway amino-acid biosynthesis; L-lysine biosynthesis via DAP pathway; (S)-tetrahydrodipicolinate from L-aspartate: step 3/4. Its function is as follows. Catalyzes the condensation of (S)-aspartate-beta-semialdehyde [(S)-ASA] and pyruvate to 4-hydroxy-tetrahydrodipicolinate (HTPA). This chain is 4-hydroxy-tetrahydrodipicolinate synthase, found in Anaplasma marginale (strain Florida).